Reading from the N-terminus, the 103-residue chain is Small ribosomal subunit protein uS10 (103 aa).

It belongs to the universal ribosomal protein uS10 family. As to quaternary structure, part of the 30S ribosomal subunit.

Its function is as follows. Involved in the binding of tRNA to the ribosomes. The polypeptide is Small ribosomal subunit protein uS10 (Persephonella marina (strain DSM 14350 / EX-H1)).